Reading from the N-terminus, the 436-residue chain is MHIVVVGLSHRTAPVEVREKLSIPDQSITESLKALKAFSDVLEVSILSTCNRMEIYALVKDKNTGISSIKEFISEYSGIIFEDLNPHLFCFRQEEAVLHLMKVSAGLDSLVLGEGQILSQVKKMMRLGQENQSTGPILNRLLTQSVSTGKKVRSETNLGTGAVSISSAAVELAQLKIGQEKGFDTLVSLESENVLVVGAGRMSRLLITHLKSKGCHKLILLNRNIDRALNLAQDFPDLEIVCRGLNELEENISLSSIVFTSTASEEPIIDLAKIEKLNLSNRLKFIDIGVPRNISNDVKQHQFVKSFDVDDLQEVVSRNQEFRQKIAKEAESLVEEERIIFLEWWASLEAVPVINKLRSDLELIRKEELQKALSRMGPDFSARERKVVEALTKGIINKILHTPVTKLRSPQSREERQVSLKIVEKLFSLVEEEQNN.

Substrate-binding positions include 49 to 52 (TCNR), serine 109, 114 to 116 (EGQ), and glutamine 120. Cysteine 50 functions as the Nucleophile in the catalytic mechanism. 198–203 (GAGRMS) contributes to the NADP(+) binding site.

Belongs to the glutamyl-tRNA reductase family. As to quaternary structure, homodimer.

It carries out the reaction (S)-4-amino-5-oxopentanoate + tRNA(Glu) + NADP(+) = L-glutamyl-tRNA(Glu) + NADPH + H(+). It participates in porphyrin-containing compound metabolism; protoporphyrin-IX biosynthesis; 5-aminolevulinate from L-glutamyl-tRNA(Glu): step 1/2. The protein operates within porphyrin-containing compound metabolism; chlorophyll biosynthesis. Catalyzes the NADPH-dependent reduction of glutamyl-tRNA(Glu) to glutamate 1-semialdehyde (GSA). The polypeptide is Glutamyl-tRNA reductase (Prochlorococcus marinus (strain AS9601)).